The following is a 123-amino-acid chain: Small ribosomal subunit protein uS12c (123 aa).

It belongs to the universal ribosomal protein uS12 family. In terms of assembly, part of the 30S ribosomal subunit.

The protein resides in the plastid. Its subcellular location is the chloroplast. With S4 and S5 plays an important role in translational accuracy. Located at the interface of the 30S and 50S subunits. This Chaetosphaeridium globosum (Charophycean green alga) protein is Small ribosomal subunit protein uS12c (rps12).